The following is a 194-amino-acid chain: MSSKEQNTPNEQASDEIETEQAKNQGADTAAEAADQRDERIAQLEAQLAESQGGVRDAQLRAQAEIENIRRRAELDVEKAHKFALEKFSNELLPVIDSLERALEVADKSNPELAAMIEGIDLTMKSLLGAVRKFGVEVVGDTNVPFNPEVHQAMSMMESEEVEPNHVMMVMQRGYTLNGRLLRPAMVAVAKSKG.

The segment covering 1–12 (MSSKEQNTPNEQ) has biased composition (polar residues). Positions 1–39 (MSSKEQNTPNEQASDEIETEQAKNQGADTAAEAADQRDE) are disordered.

Belongs to the GrpE family. Homodimer.

It localises to the cytoplasm. In terms of biological role, participates actively in the response to hyperosmotic and heat shock by preventing the aggregation of stress-denatured proteins, in association with DnaK and GrpE. It is the nucleotide exchange factor for DnaK and may function as a thermosensor. Unfolded proteins bind initially to DnaJ; upon interaction with the DnaJ-bound protein, DnaK hydrolyzes its bound ATP, resulting in the formation of a stable complex. GrpE releases ADP from DnaK; ATP binding to DnaK triggers the release of the substrate protein, thus completing the reaction cycle. Several rounds of ATP-dependent interactions between DnaJ, DnaK and GrpE are required for fully efficient folding. This Erwinia tasmaniensis (strain DSM 17950 / CFBP 7177 / CIP 109463 / NCPPB 4357 / Et1/99) protein is Protein GrpE.